Consider the following 184-residue polypeptide: UPF0316 protein YebE (184 aa).

Transmembrane regions (helical) follow at residues 9 to 29 (GIAM…FFTI), 41 to 61 (LAAG…SLVL), and 67 to 87 (IQNV…GMKI).

This sequence belongs to the UPF0316 family.

The protein localises to the cell membrane. The chain is UPF0316 protein YebE (yebE) from Bacillus subtilis (strain 168).